A 168-amino-acid polypeptide reads, in one-letter code: NADH-quinone oxidoreductase subunit E 2 (168 aa).

4 residues coordinate [2Fe-2S] cluster: Cys-77, Cys-82, Cys-118, and Cys-122.

Belongs to the complex I 24 kDa subunit family. The cofactor is [2Fe-2S] cluster.

The catalysed reaction is a quinone + NADH + 5 H(+)(in) = a quinol + NAD(+) + 4 H(+)(out). In terms of biological role, NDH-1 shuttles electrons from NADH, via FMN and iron-sulfur (Fe-S) centers, to quinones in the respiratory chain. The immediate electron acceptor for the enzyme in this species is believed to be ubiquinone. Couples the redox reaction to proton translocation (for every two electrons transferred, four hydrogen ions are translocated across the cytoplasmic membrane), and thus conserves the redox energy in a proton gradient. This is NADH-quinone oxidoreductase subunit E 2 (nuoE2) from Rhizobium meliloti (strain 1021) (Ensifer meliloti).